A 318-amino-acid polypeptide reads, in one-letter code: 2-methyl-6-phytyl-1,4-hydroquinone methyltransferase (318 aa).

The first 39 residues, M1 to A39, serve as a signal peptide directing secretion. An SAM motif I region spans residues V97 to G106. The SAM motif II stretch occupies residues G157–V165. Positions V184 to V193 are SAM motif III.

Belongs to the class I-like SAM-binding methyltransferase superfamily. gTMT family.

The enzyme catalyses 2-methyl-6-phytyl-1,4-benzene-1,4-diol + S-adenosyl-L-methionine = 2,3-dimethyl-6-phytylbenzene-1,4-diol + S-adenosyl-L-homocysteine + H(+). It catalyses the reaction 2-methyl-6-(all-trans-nonaprenyl)benzene-1,4-diol + S-adenosyl-L-methionine = plastoquinol-9 + S-adenosyl-L-homocysteine + H(+). The catalysed reaction is 6-geranylgeranyl-2-methylbenzene-1,4-diol + S-adenosyl-L-methionine = 6-geranylgeranyl-2,3-dimethylbenzene-1,4-diol + S-adenosyl-L-homocysteine + H(+). It participates in cofactor biosynthesis; tocopherol biosynthesis. Its function is as follows. Involved in a key methylation step in both tocopherol (vitamin E) and plastoquinone synthesis. Catalyzes the conversion of 2-methyl-6-phytyl-1,4-hydroquinol (MPBQ) to 2,3-dimethyl-6-phytyl-1,4-hydroquinol (DMPQ, a substrate for tocopherol cyclase), and 2-methyl-6-solanyl-1,4-benzoquinol (MSBQ) to plastoquinol. This is 2-methyl-6-phytyl-1,4-hydroquinone methyltransferase from Synechocystis sp. (strain ATCC 27184 / PCC 6803 / Kazusa).